Consider the following 406-residue polypeptide: MRVAYVDPFSGASGDMLLGALVDAGVPPEELADRLASALDVDGYRLVVERVVRRGLAGTQVRVIVEAAQPARDWAEIRDLLSASALPPRVKERALAVFRRLAEAEASVHSVPLESVHFHEVGAVDSIVDVVGVVWGFELLGVEEITCGPLPLSRGWVETAHGRLPVPAPATALLLAQAGAPLVPLDIEAELVTPTGAALLVELARFVRPAFLPERVGYGFGTRELPWPNALRLWIGEAFAVPSRLDEAELLLEANLDDMNPQFIEPLVDQLFAAGALDVYLTPIVMKRSRPAVIVSAICRAKDRPVLERVLFEHSTTFGVRGIPIERTKLARRSVAVATRWGEVAVKLKIVQDRIVDAVPEYRDCLAIHQRTGLPIREIWNEAARLAAVWIGQRVGEEDQEATLPE.

It belongs to the LarC family.

This chain is Putative nickel insertion protein, found in Thermomicrobium roseum (strain ATCC 27502 / DSM 5159 / P-2).